We begin with the raw amino-acid sequence, 236 residues long: 2-C-methyl-D-erythritol 4-phosphate cytidylyltransferase (236 aa).

It belongs to the IspD/TarI cytidylyltransferase family. IspD subfamily. In terms of assembly, homodimer.

It carries out the reaction 2-C-methyl-D-erythritol 4-phosphate + CTP + H(+) = 4-CDP-2-C-methyl-D-erythritol + diphosphate. Its pathway is isoprenoid biosynthesis; isopentenyl diphosphate biosynthesis via DXP pathway; isopentenyl diphosphate from 1-deoxy-D-xylulose 5-phosphate: step 2/6. Functionally, catalyzes the formation of 4-diphosphocytidyl-2-C-methyl-D-erythritol from CTP and 2-C-methyl-D-erythritol 4-phosphate (MEP). The protein is 2-C-methyl-D-erythritol 4-phosphate cytidylyltransferase of Salmonella paratyphi C (strain RKS4594).